Reading from the N-terminus, the 162-residue chain is Interleukin-15 (162 aa).

Positions 1–29 (MRILKPYLRSTSIQCYLCLLLNSHFLTEA) are cleaved as a signal peptide. Positions 30–48 (GIHVFILGCISAGLPKTEA) are excised as a propeptide. 2 cysteine pairs are disulfide-bonded: cysteine 83–cysteine 133 and cysteine 90–cysteine 136. N-linked (GlcNAc...) asparagine glycans are attached at residues asparagine 113, asparagine 121, and asparagine 127.

The protein belongs to the IL-15/IL-21 family.

The protein resides in the secreted. Functionally, cytokine that plays a major role in the development of inflammatory and protective immune responses to microbial invaders and parasites by modulating immune cells of both the innate and adaptive immune systems. Stimulates the proliferation of natural killer cells, T-cells and B-cells and promotes the secretion of several cytokines. In monocytes, induces the production of IL8 and monocyte chemotactic protein 1/CCL2, two chemokines that attract neutrophils and monocytes respectively to sites of infection. Unlike most cytokines, which are secreted in soluble form, IL15 is expressed in association with its high affinity IL15RA on the surface of IL15-producing cells and delivers signals to target cells that express IL2RB and IL2RG receptor subunits. Binding to its receptor triggers the phosphorylation of JAK1 and JAK3 and the recruitment and subsequent phosphorylation of signal transducer and activator of transcription-3/STAT3 and STAT5. In mast cells, induces the rapid tyrosine phosphorylation of STAT6 and thereby controls mast cell survival and release of cytokines such as IL4. The sequence is that of Interleukin-15 (IL15) from Bubalus bubalis (Domestic water buffalo).